We begin with the raw amino-acid sequence, 1251 residues long: Insulin receptor substrate 1 (1251 aa).

The residue at position 3 (Ser3) is a Phosphoserine. The mediates interaction with PHIP stretch occupies residues 3 to 137 (SPPESDGFSD…GAGGGGGSCS (135 aa)). Positions 12–115 (DVRKVGYLRK…WYQALLQLHN (104 aa)) constitute a PH domain. Ser99 is subject to Phosphoserine; by CK2. Positions 160–264 (FKEVWQVILK…EAMRAMSDEF (105 aa)) constitute an IRS-type PTB domain. The segment at 262–430 (DEFRPRSKSQ…SDGGFISSDE (169 aa)) is disordered. The span at 269–281 (KSQSSSNCSNPIS) shows a compositional bias: low complexity. Residue Ser270 is modified to Phosphoserine. The residue at position 307 (Ser307) is a Phosphoserine; by RPS6KB1. Ser312 carries the phosphoserine; by IKKB, MAPK8 and RPS6KB1 modification. 4 positions are modified to phosphoserine: Ser323, Ser330, Ser345, and Ser348. The span at 354 to 363 (THAHRHRGSA) shows a compositional bias: basic residues. 2 stretches are compositionally biased toward low complexity: residues 383 to 404 (SPSATSPVSLSSSSTSGHGSTS) and 412 to 424 (SSASVSGSPSDGG). Ser419 bears the Phosphoserine mark. Phosphothreonine occurs at positions 446 and 453. Phosphotyrosine; by INSR is present on Tyr465. Positions 465–468 (YICM) match the YXXM motif 1 motif. The disordered stretch occupies residues 494–513 (YTPGTGLGTSPALAGDEASS). Ser527 bears the Phosphoserine; by RPS6KB1 mark. The YXXM motif 2 signature appears at 551-554 (YTEM). Residues 594–610 (RRGGHHRPDSSTLHTDD) are compositionally biased toward basic and acidic residues. The disordered stretch occupies residues 594-616 (RRGGHHRPDSSTLHTDDGYMPMS). Tyr612 carries the post-translational modification Phosphotyrosine; by INSR. The short motif at 612–615 (YMPM) is the YXXM motif 3 element. Residue Ser629 is modified to Phosphoserine. At Tyr632 the chain carries Phosphotyrosine; by INSR. The short motif at 632 to 635 (YMPM) is the YXXM motif 4 element. At Ser636 the chain carries Phosphoserine; by RPS6KB1. Tyr662 bears the Phosphotyrosine mark. A YXXM motif 5 motif is present at residues 662–665 (YMMM). The segment at 668–692 (SGGCSPDIGGGPSSSSSSTVPSGSS) is disordered. Positions 730-733 (YMNM) match the YXXM motif 6 motif. 2 disordered regions span residues 734–753 (SPVGDSNTSSPSDCYYGPED) and 769–946 (FKHT…EETG). Positions 774 to 783 (RPGEPEEGAR) are enriched in basic and acidic residues. Ser792 carries the post-translational modification Phosphoserine; by AMPK and SIK2. 2 stretches are compositionally biased toward low complexity: residues 799–813 (AATADDSSSSTSSDS) and 875–891 (QQQQQQQQQQQQQQQQQ). A Phosphoserine modification is found at Ser901. Tyr905 carries the phosphotyrosine; by INSR modification. The interval 905 to 907 (YVN) is GRB2-binding. The span at 924–937 (SRSSPSVRCPSQLQ) shows a compositional bias: polar residues. 2 positions are modified to phosphotyrosine; by INSR: Tyr950 and Tyr998. Short sequence motifs (YXXM motif) lie at residues 950–953 (YMKM), 998–1001 (YMTM), and 1021–1024 (YADM). Disordered stretches follow at residues 1091–1124 (NQSAKVIRADPQGCRRRHSSETFSSTPSATRVGN) and 1130–1149 (AGAAIGGSGGSSSSSEDVKR). Phosphoserine occurs at positions 1109 and 1110. Residues 1111–1123 (ETFSSTPSATRVG) show a composition bias toward polar residues. Tyr1188 is modified (phosphotyrosine; by INSR). Residue Lys1195 forms a Glycyl lysine isopeptide (Lys-Gly) (interchain with G-Cter in ubiquitin) linkage. A disordered region spans residues 1195 to 1251 (KDFKQRPQECTPQPQPPPPPPPHQPLGSSESSSTRRSSEDLSAYASISFQKQPEDLQ). The segment covering 1207-1218 (QPQPPPPPPPHQ) has biased composition (pro residues). Position 1238 is a phosphotyrosine; by INSR (Tyr1238).

In terms of assembly, interacts with UBTF and PIK3CA. Interacts (via phosphorylated YXXM motifs) with PIK3R1. Interacts with ROCK1 and FER. Interacts (via PH domain) with PHIP. Interacts with GRB2. Interacts with SOCS7. Interacts (via IRS-type PTB domain) with IGF1R and INSR (via the tyrosine-phosphorylated NPXY motif). Interacts with ALK. Interacts with EIF2AK2/PKR. Interacts with GKAP1. Interacts with DGKZ in the absence of insulin; insulin stimulation decreases this interaction. Found in a ternary complex with DGKZ and PIP5K1A in the absence of insulin stimulation. Interacts with SQSTM1; the interaction is disrupted by the presence of tensin TNS2. Interacts with NCK1 (via SH2 domain). Interacts with NCK2 (via SH3 domain). Interacts with SH2B1; this interaction enhances leptin-induced activation of the PI3-kinase pathway. Interacts with DVL2; this interaction promotes the Wnt/beta-catenin signaling pathway. Interacts with JAK1. Post-translationally, serine phosphorylation of IRS1 is a mechanism for insulin resistance. Ser-312 phosphorylation inhibits insulin action through disruption of IRS1 interaction with the insulin receptor. Phosphorylation of Tyr-905 is required for GRB2-binding. Phosphorylated by ALK. Phosphorylated at Ser-270, Ser-307, Ser-636 and Ser-1109 by RPS6KB1; phosphorylation induces accelerated degradation of IRS1. Phosphorylated on tyrosine residues in response to insulin. In skeletal muscles, dephosphorylated on Tyr-612 by TNS2 under anabolic conditions; dephosphorylation results in the proteasomal degradation of IRS1. Ubiquitinated by the Cul7-RING(FBXW8) complex in a mTOR-dependent manner, leading to its degradation: the Cul7-RING(FBXW8) complex recognizes and binds IRS1 previously phosphorylated by S6 kinase (RPS6KB1 or RPS6KB2). Ubiquitinated by TRAF4 through 'Lys-29' linkage; this ubiquitination regulates the interaction of IRS1 with IGFR and IRS1 tyrosine phosphorylation upon IGF1 stimulation. In terms of processing, S-nitrosylation at by BLVRB inhibits its activity.

The protein resides in the cytoplasm. Its subcellular location is the nucleus. Its function is as follows. Signaling adapter protein that participates in the signal transduction from two prominent receptor tyrosine kinases, insulin receptor/INSR and insulin-like growth factor I receptor/IGF1R. Plays therefore an important role in development, growth, glucose homeostasis as well as lipid metabolism. Upon phosphorylation by the insulin receptor, functions as a signaling scaffold that propagates insulin action through binding to SH2 domain-containing proteins including the p85 regulatory subunit of PI3K, NCK1, NCK2, GRB2 or SHP2. Recruitment of GRB2 leads to the activation of the guanine nucleotide exchange factor SOS1 which in turn triggers the Ras/Raf/MEK/MAPK signaling cascade. Activation of the PI3K/AKT pathway is responsible for most of insulin metabolic effects in the cell, and the Ras/Raf/MEK/MAPK is involved in the regulation of gene expression and in cooperation with the PI3K pathway regulates cell growth and differentiation. Acts a positive regulator of the Wnt/beta-catenin signaling pathway through suppression of DVL2 autophagy-mediated degradation leading to cell proliferation. The sequence is that of Insulin receptor substrate 1 (IRS1) from Chlorocebus aethiops (Green monkey).